The chain runs to 1187 residues: DNA-directed RNA polymerase subunit beta (1187 aa).

The protein belongs to the RNA polymerase beta chain family. The RNAP catalytic core consists of 2 alpha, 1 beta, 1 beta' and 1 omega subunit. When a sigma factor is associated with the core the holoenzyme is formed, which can initiate transcription.

The enzyme catalyses RNA(n) + a ribonucleoside 5'-triphosphate = RNA(n+1) + diphosphate. In terms of biological role, DNA-dependent RNA polymerase catalyzes the transcription of DNA into RNA using the four ribonucleoside triphosphates as substrates. The protein is DNA-directed RNA polymerase subunit beta of Petrotoga mobilis (strain DSM 10674 / SJ95).